The chain runs to 943 residues: Leucine--tRNA ligase (943 aa).

The short motif at 36 to 46 is the 'HIGH' region element; sequence PYPSGSMHVGH. The short motif at 623-627 is the 'KMSKS' region element; sequence KMSSS. The tract at residues 910–943 is disordered; that stretch reads ASEVVIHTDPEEAPGPEDRKAGARPLRPGIWLEE. Basic and acidic residues predominate over residues 915 to 930; that stretch reads IHTDPEEAPGPEDRKA.

It belongs to the class-I aminoacyl-tRNA synthetase family.

The protein localises to the cytoplasm. It carries out the reaction tRNA(Leu) + L-leucine + ATP = L-leucyl-tRNA(Leu) + AMP + diphosphate. The protein is Leucine--tRNA ligase of Methanopyrus kandleri (strain AV19 / DSM 6324 / JCM 9639 / NBRC 100938).